The following is a 430-amino-acid chain: Probable FAD-dependent monooxygenase (430 aa).

The N-terminal stretch at 1–23 (MGSTSTPPHVLIIGAGITGLALA) is a signal peptide. 9–37 (HVLIIGAGITGLALAQALRKHGVSFAVYE) provides a ligand contact to FAD. N-linked (GlcNAc...) asparagine glycosylation is found at Asn130 and Asn151. An FAD-binding site is contributed by 307–330 (LEDWPTPPKGSWSNLGGTATLVGD).

Requires FAD as cofactor.

This Arthroderma benhamiae (strain ATCC MYA-4681 / CBS 112371) (Trichophyton mentagrophytes) protein is Probable FAD-dependent monooxygenase.